Reading from the N-terminus, the 325-residue chain is Lipid droplet-associated hydrolase (325 aa).

The active-site Nucleophile is the S139. Residues D271 and H300 each act as charge relay system in the active site.

Belongs to the AB hydrolase superfamily. LDAH family. As to expression, present in macrophage-rich areas in atherosclerotic lesions (at protein level). Expressed in monocytes and monocyte-derived macrophages (at protein level).

Its subcellular location is the lipid droplet. It localises to the endoplasmic reticulum. The enzyme catalyses a cholesterol ester + H2O = cholesterol + a fatty acid + H(+). Its function is as follows. Probable serine lipid hydrolase associated with lipid droplets. Has low cholesterol esterase activity. Appears to lack triglyceride lipase activity. Involved in cholesterol and triglyceride homeostasis; has opposing effects, stimulating cellular triglyceride accumulation and cellular cholesterol release. Acts antagonistically with PNPLA2/ATGL in regulation of cellular lipid stores. May regulate triglyceride accumulation indirectly through stimulation of PNPLA2/ATGL ubiquitination and proteasomal degradation. Promotes microtubule-dependent lipid droplet fusion. Highly expressed in macrophage-rich areas in atherosclerotic lesions, suggesting that it could promote cholesterol ester turnover in macrophages. The protein is Lipid droplet-associated hydrolase of Homo sapiens (Human).